The chain runs to 377 residues: Actin-related protein T2 (377 aa).

This sequence belongs to the actin family.

It is found in the cytoplasm. The protein localises to the cytoskeleton. This chain is Actin-related protein T2 (Actrt2), found in Mus musculus (Mouse).